Reading from the N-terminus, the 210-residue chain is Phosphoheptose isomerase (210 aa).

In terms of domain architecture, SIS spans 38 to 202; it reads IAACLARGGK…ENVAALAPYL (165 aa). 53-55 provides a ligand contact to substrate; it reads NGG. Zn(2+) contacts are provided by histidine 62 and glutamate 66. Substrate-binding positions include glutamate 66, 95–96, 121–123, serine 126, and glutamine 173; these read ND and STS. Zn(2+)-binding residues include glutamine 173 and histidine 181.

It belongs to the SIS family. GmhA subfamily. In terms of assembly, homotetramer. The cofactor is Zn(2+).

The protein resides in the cytoplasm. The enzyme catalyses 2 D-sedoheptulose 7-phosphate = D-glycero-alpha-D-manno-heptose 7-phosphate + D-glycero-beta-D-manno-heptose 7-phosphate. It functions in the pathway carbohydrate biosynthesis; D-glycero-D-manno-heptose 7-phosphate biosynthesis; D-glycero-alpha-D-manno-heptose 7-phosphate and D-glycero-beta-D-manno-heptose 7-phosphate from sedoheptulose 7-phosphate: step 1/1. Its function is as follows. Catalyzes the isomerization of sedoheptulose 7-phosphate in D-glycero-D-manno-heptose 7-phosphate. In Desulfovibrio desulfuricans (strain ATCC 27774 / DSM 6949 / MB), this protein is Phosphoheptose isomerase.